A 491-amino-acid polypeptide reads, in one-letter code: Cytochrome P450 2B9 (491 aa).

S128 is modified (phosphoserine; by PKA). C436 contacts heme.

Belongs to the cytochrome P450 family. Heme is required as a cofactor.

It localises to the endoplasmic reticulum membrane. Its subcellular location is the microsome membrane. The catalysed reaction is an organic molecule + reduced [NADPH--hemoprotein reductase] + O2 = an alcohol + oxidized [NADPH--hemoprotein reductase] + H2O + H(+). Cytochromes P450 are a group of heme-thiolate monooxygenases. In liver microsomes, this enzyme is involved in an NADPH-dependent electron transport pathway. It oxidizes a variety of structurally unrelated compounds, including steroids, fatty acids, and xenobiotics. This is Cytochrome P450 2B9 (Cyp2b9) from Mus musculus (Mouse).